The primary structure comprises 31 residues: Protamine CIII (31 aa).

The interval 1–31 (MPRRRRASRPVRRRRRPRVSRRRRRGGRRRR) is disordered.

As to expression, testis.

The protein resides in the nucleus. It localises to the chromosome. Its function is as follows. Protamines substitute for histones in the chromatin of sperm during the haploid phase of spermatogenesis. They compact sperm DNA into a highly condensed, stable and inactive complex. This Oncorhynchus mykiss (Rainbow trout) protein is Protamine CIII.